We begin with the raw amino-acid sequence, 681 residues long: Methionine--tRNA ligase (681 aa).

A 'HIGH' region motif is present at residues 14–24; the sequence is PYANGSIHLGH. Zn(2+) is bound by residues cysteine 145, cysteine 148, cysteine 158, and cysteine 161. The 'KMSKS' region motif lies at 331–335; the sequence is KMSKS. Lysine 334 contributes to the ATP binding site. The 103-residue stretch at 579–681 folds into the tRNA-binding domain; that stretch reads AFAAVDLRIA…AGAKPGQRVH (103 aa).

Belongs to the class-I aminoacyl-tRNA synthetase family. MetG type 1 subfamily. As to quaternary structure, homodimer. Zn(2+) is required as a cofactor.

It localises to the cytoplasm. The enzyme catalyses tRNA(Met) + L-methionine + ATP = L-methionyl-tRNA(Met) + AMP + diphosphate. In terms of biological role, is required not only for elongation of protein synthesis but also for the initiation of all mRNA translation through initiator tRNA(fMet) aminoacylation. In Azotobacter vinelandii (strain DJ / ATCC BAA-1303), this protein is Methionine--tRNA ligase.